We begin with the raw amino-acid sequence, 293 residues long: Protease HtpX (293 aa).

The next 2 helical transmembrane spans lie at 4–24 and 34–54; these read IALF…VLSL and GLMI…LLMS. His139 lines the Zn(2+) pocket. Residue Glu140 is part of the active site. His143 contributes to the Zn(2+) binding site. Helical transmembrane passes span 158 to 178 and 193 to 213; these read VVNT…AGFL and MVYF…ASII. Glu222 contacts Zn(2+).

This sequence belongs to the peptidase M48B family. It depends on Zn(2+) as a cofactor.

The protein resides in the cell inner membrane. The chain is Protease HtpX from Yersinia pseudotuberculosis serotype O:1b (strain IP 31758).